A 145-amino-acid chain; its full sequence is 3-hydroxyacyl-[acyl-carrier-protein] dehydratase FabZ (145 aa).

H48 is an active-site residue.

Belongs to the thioester dehydratase family. FabZ subfamily.

The protein resides in the cytoplasm. The enzyme catalyses a (3R)-hydroxyacyl-[ACP] = a (2E)-enoyl-[ACP] + H2O. Functionally, involved in unsaturated fatty acids biosynthesis. Catalyzes the dehydration of short chain beta-hydroxyacyl-ACPs and long chain saturated and unsaturated beta-hydroxyacyl-ACPs. This Cellvibrio japonicus (strain Ueda107) (Pseudomonas fluorescens subsp. cellulosa) protein is 3-hydroxyacyl-[acyl-carrier-protein] dehydratase FabZ.